We begin with the raw amino-acid sequence, 57 residues long: Large ribosomal subunit protein bL32 (57 aa).

This sequence belongs to the bacterial ribosomal protein bL32 family.

The chain is Large ribosomal subunit protein bL32 from Mycolicibacterium gilvum (strain PYR-GCK) (Mycobacterium gilvum (strain PYR-GCK)).